The chain runs to 546 residues: Hexose transporter HXT10 (546 aa).

Residues 1-44 (MVSSSVSILGTSAKASTSLSRKDEIKLTPETREASLDIPYKPII) lie on the Cytoplasmic side of the membrane. Residues 45-65 (AYWTVMGLCLMIAFGGFIFGW) traverse the membrane as a helical segment. Residues 66–100 (DTGTISGFINQTDFKRRFGELQRDGSFQLSDVRTG) lie on the Extracellular side of the membrane. N-linked (GlcNAc...) asparagine glycosylation occurs at asparagine 75. A helical membrane pass occupies residues 101–121 (LIVGIFNIGCALGGLTLGRLG). Topologically, residues 122–127 (DIYGRK) are cytoplasmic. A helical membrane pass occupies residues 128-148 (IGLMCVILVYVVGIVIQIASS). The Extracellular segment spans residues 149–158 (DKWYQYFIGR). Residues 159-179 (IVSGMGVGGVAVLSPTLISEI) traverse the membrane as a helical segment. At 180–185 (SPKHLR) the chain is on the cytoplasmic side. The chain crosses the membrane as a helical span at residues 186-206 (GTCVSFYQLMITLGIFLGYCT). Residues 207–220 (NYGTKKYSNSIQWR) lie on the Extracellular side of the membrane. The chain crosses the membrane as a helical span at residues 221–241 (VPLGLCFAWAIFMVIGMVMVP). The Cytoplasmic portion of the chain corresponds to 242 to 324 (ESPRYLVEKG…IQSLQQLTGC (83 aa)). The helical transmembrane segment at 325–341 (NYFFYYGTTIFNAVGMQ) threads the bilayer. Topologically, residues 342-347 (DSFETS) are extracellular. Residues 348–365 (IVLGAVNFASTFVALYIV) form a helical membrane-spanning segment. The Cytoplasmic segment spans residues 366–372 (DKFGRRK). Residues 373 to 393 (CLLWGSASMAICFVIFATVGV) traverse the membrane as a helical segment. Residues 394-415 (TRLWPQGKDQPSSQSAGNVMIV) lie on the Extracellular side of the membrane. A helical transmembrane segment spans residues 416 to 436 (FTCFFIFSFAITWAPIAYVIV). Over 437 to 453 (AETYPLRVKNRAMAIAV) the chain is Cytoplasmic. Residues 454-474 (GANWMWGFLIGFFTPFITRSI) traverse the membrane as a helical segment. A topological domain (extracellular) is located at residue glycine 475. A helical transmembrane segment spans residues 476-496 (FSYGYVFMGCLIFSYFYVFFF). Over 497 to 546 (VCETKGLTLEEVNEMYEERIKPWKSGGWIPSSRRTPQPTSSTPLVIVDSK) the chain is Cytoplasmic.

It belongs to the major facilitator superfamily. Sugar transporter (TC 2.A.1.1) family.

It localises to the membrane. Functionally, probable glucose transporter. The chain is Hexose transporter HXT10 (HXT10) from Saccharomyces cerevisiae (strain ATCC 204508 / S288c) (Baker's yeast).